We begin with the raw amino-acid sequence, 387 residues long: Enoyl-[acyl-carrier-protein] reductase 2, mitochondrial (387 aa).

A mitochondrion-targeting transit peptide spans 1–23 (MYRNQLARASLRSTSSINQIRNM). Tyr-79 (proton donor) is an active-site residue. NADP(+) is bound by residues Asn-172, 199 to 202 (NSAV), 222 to 224 (RDR), 297 to 300 (YGGM), 322 to 324 (FWV), and Lys-382.

The protein belongs to the zinc-containing alcohol dehydrogenase family. Quinone oxidoreductase subfamily. In terms of assembly, homodimer.

The protein resides in the mitochondrion matrix. It carries out the reaction a 2,3-saturated acyl-[ACP] + NADP(+) = a (2E)-enoyl-[ACP] + NADPH + H(+). In terms of biological role, catalyzes the NADPH-dependent reduction of trans-2-enoyl thioesters in mitochondrial fatty acid synthesis (fatty acid synthesis type II). Fatty acid chain elongation in mitochondria uses acyl carrier protein (ACP) as an acyl group carrier, but the enzyme accepts both ACP and CoA thioesters as substrates in vitro. Required for respiration and the maintenance of the mitochondrial compartment. The polypeptide is Enoyl-[acyl-carrier-protein] reductase 2, mitochondrial (ETR2) (Debaryomyces hansenii (strain ATCC 36239 / CBS 767 / BCRC 21394 / JCM 1990 / NBRC 0083 / IGC 2968) (Yeast)).